Consider the following 191-residue polypeptide: MTDSSNAHEAENPTVPTPDNEIQDLQQEIATLKAELKEKNDKYLMVLAESENARKRMQKERQEMMQYAVENALIDFLVPIESMEKALGFASQMSDEVKNWALGFNMILQQFKQVFEEKGIVEYSSVGQKFNPFLHEAVETEETTKVPEGTIVEEFSKGYKIGDRPIRVAKVKVSKAPAPQGTEAEIENNNE.

Basic and acidic residues predominate over residues 1–11; the sequence is MTDSSNAHEAE. Disordered stretches follow at residues 1 to 22 and 172 to 191; these read MTDSSNAHEAENPTVPTPDNEI and KVSKAPAPQGTEAEIENNNE.

The protein belongs to the GrpE family. In terms of assembly, homodimer.

It is found in the cytoplasm. Functionally, participates actively in the response to hyperosmotic and heat shock by preventing the aggregation of stress-denatured proteins, in association with DnaK and GrpE. It is the nucleotide exchange factor for DnaK and may function as a thermosensor. Unfolded proteins bind initially to DnaJ; upon interaction with the DnaJ-bound protein, DnaK hydrolyzes its bound ATP, resulting in the formation of a stable complex. GrpE releases ADP from DnaK; ATP binding to DnaK triggers the release of the substrate protein, thus completing the reaction cycle. Several rounds of ATP-dependent interactions between DnaJ, DnaK and GrpE are required for fully efficient folding. The protein is Protein GrpE of Chlamydia abortus (strain DSM 27085 / S26/3) (Chlamydophila abortus).